The primary structure comprises 313 residues: MASLCQRQQHCVKASIASEWQLAEAQDQLCGLELHSSESVEQERARALASSTELSHTEHQWRLKERMLGTLCPEANRDVFDKSIINITQSWPNESDPDKSLNFVQRNEELLKHFGMLGRWDDSQRFLAEYHHLICEETANYLILWCFRLQAEKKEALMEQVAHQAVVMQFILEMARNTQQDPRGCFRHFFQKAKAGQEGYLDVFHTELQAFKDRVKEYTMKSTGETPKDTVHQNTPPACCLDPKEVFESLPQELKTCIQMQDMQILQNVLSSMNPQVAEYHVKRCLEAGLWTNIPRTSKDESSEVDEWKMMET.

The protein belongs to the CDC37 family. In terms of assembly, forms complexes with Hsp70 and Hsp90.

Its subcellular location is the cytoplasm. Co-chaperone that binds to numerous proteins and promotes their interaction with Hsp70 and Hsp90. This chain is Hsp90 co-chaperone Cdc37-like 1 (cdc37l1), found in Danio rerio (Zebrafish).